Consider the following 317-residue polypeptide: Putative ribosomal protein uL10-like (317 aa).

Tyr24 is modified (phosphotyrosine). Thr59 carries the phosphothreonine modification. The tract at residues 292–317 (AAAPAKVEAKEESEESDEDMGFGLFD) is disordered. Lys297 is covalently cross-linked (Glycyl lysine isopeptide (Lys-Gly) (interchain with G-Cter in SUMO1); alternate). A Glycyl lysine isopeptide (Lys-Gly) (interchain with G-Cter in SUMO2); alternate cross-link involves residue Lys297. Positions 302–311 (EESEESDEDM) are enriched in acidic residues. A phosphoserine mark is found at Ser304 and Ser307.

Belongs to the universal ribosomal protein uL10 family. In terms of assembly, P0 forms a pentameric complex by interaction with dimers of P1 and P2.

Its function is as follows. Ribosomal protein P0 is the functional equivalent of E.coli protein L10. This Homo sapiens (Human) protein is Putative ribosomal protein uL10-like (RPLP0P6).